Reading from the N-terminus, the 498-residue chain is Cytochrome P450 monooxygenase aflU (498 aa).

The helical transmembrane segment at 5–27 (TVYTSLIGLLVALTVRSIYRVYF) threads the bilayer. Asn-259 and Asn-354 each carry an N-linked (GlcNAc...) asparagine glycan. Position 438 (Cys-438) interacts with heme.

Belongs to the cytochrome P450 family. Heme serves as cofactor.

It is found in the membrane. Its pathway is mycotoxin biosynthesis; aflatoxin biosynthesis. Functionally, cytochrome P450 monooxygenase; part of the gene cluster that mediates the biosynthesis of aflatoxins, a group of polyketide-derived furanocoumarins, and part of the most toxic and carcinogenic compounds among the known mycotoxins. The four major aflatoxins produced by A.parasiticus are aflatoxin B1 (AFB1), aflatoxin B2 (AFB2), aflatoxin G1 (AFG1) and aflatoxin G2 (AFG2). Within the aflatoxin pathway, the cytochrome P450 monooxygenase aflU is involved in the last steps in which OMST is converted to aflatoxins B1 and G1, and DHOMST to aflatoxins B2 and G2. The biosynthesis of aflatoxins begins with the norsolorinic acid synthase aflC that combines a hexanoyl starter unit produced by the fatty acid synthase aflA/aflB and 7 malonyl-CoA extender units to synthesize the precursor NOR. The second step is the conversion of NOR to averantin and requires the norsolorinic acid ketoreductase aflD, which catalyzes the dehydration of norsolorinic acid to form (1'S)-averantin. The norsolorinic acid reductases aflE and aflF may also play a role in the conversion of NOR to AVN. The cytochrome P450 monooxygenase aflG then catalyzes the hydroxylation of AVN to 5'hydroxyaverantin (HAVN). The next step is performed by the 5'-hydroxyaverantin dehydrogenase aflH that transforms HAVN to 5'-oxoaverantin (OAVN) which is further converted to averufin (AVF) by aflK that plays a dual role in the pathway, as a 5'-oxoaverantin cyclase that mediates conversion of 5'-oxoaverantin, as well as a versicolorin B synthase in a later step in the pathway. The averufin oxidase aflI catalyzes the conversion of AVF to versiconal hemiacetal acetate (VHA). VHA is then the substrate for the versiconal hemiacetal acetate esterase aflJ to yield versiconal (VAL). Versicolorin B synthase aflK then converts VAL to versicolorin B (VERB) by closing the bisfuran ring of aflatoxin which is required for DNA-binding, thus giving to aflatoxin its activity as a mutagen. Then, the activity of the versicolorin B desaturase aflL leads to versicolorin A (VERA). A branch point starts from VERB since it can also be converted to dihydrodemethylsterigmatocystin (DMDHST), probably also by aflL, VERA being a precursor for aflatoxins B1 and G1, and DMDHST for aflatoxins B2 and G2. Next, the versicolorin reductase aflM and the cytochrome P450 monooxygenase aflN are involved in conversion of VERA to demethylsterigmatocystin (DMST). AflX and aflY seem also involved in this step, through probable aflX-mediated epoxide ring-opening step following versicolorin A oxidation and aflY-mediated Baeyer-Villiger oxidation required for the formation of the xanthone ring. The methyltransferase aflO then leads to the modification of DMST to sterigmatocystin (ST), and of DMDHST to dihydrosterigmatocystin (DHST). Both ST and DHST are then substrates of the O-methyltransferase aflP to yield O-methylsterigmatocystin (OMST) and dihydro-O-methylsterigmatocystin (DHOMST), respectively. Finally OMST is converted to aflatoxins B1 and G1, and DHOMST to aflatoxins B2 and G2, via the action of several enzymes including O-methylsterigmatocystin oxidoreductase aflQ, the cytochrome P450 monooxygenase aflU, but also the NADH-dependent flavin oxidoreductase nadA which is specifically required for the synthesis of AFG1. The chain is Cytochrome P450 monooxygenase aflU from Aspergillus parasiticus (strain ATCC 56775 / NRRL 5862 / SRRC 143 / SU-1).